Consider the following 252-residue polypeptide: dITP/XTP pyrophosphatase (252 aa).

7 to 12 (THNEGK) provides a ligand contact to substrate. The active-site Proton acceptor is the D74. A Mg(2+)-binding site is contributed by D74. Substrate is bound by residues S75 and 193–196 (FGYD). Residues 202 to 229 (DDQPAGRVSTEPDHEGEPLTSAEMTPAE) are disordered. Residues K230 and 235–236 (HR) each bind substrate.

Belongs to the HAM1 NTPase family. In terms of assembly, homodimer. It depends on Mg(2+) as a cofactor.

The enzyme catalyses XTP + H2O = XMP + diphosphate + H(+). It carries out the reaction dITP + H2O = dIMP + diphosphate + H(+). It catalyses the reaction ITP + H2O = IMP + diphosphate + H(+). Its function is as follows. Pyrophosphatase that catalyzes the hydrolysis of nucleoside triphosphates to their monophosphate derivatives, with a high preference for the non-canonical purine nucleotides XTP (xanthosine triphosphate), dITP (deoxyinosine triphosphate) and ITP. Seems to function as a house-cleaning enzyme that removes non-canonical purine nucleotides from the nucleotide pool, thus preventing their incorporation into DNA/RNA and avoiding chromosomal lesions. In Bifidobacterium longum (strain DJO10A), this protein is dITP/XTP pyrophosphatase.